The following is a 132-amino-acid chain: Sirohydrochlorin cobaltochelatase (132 aa).

The active-site Proton acceptor is histidine 10. Histidine 10 is a binding site for Co(2+). Substrate is bound by residues arginine 46 and 69-74 (ISYGLH). Histidine 74 is a Co(2+) binding site.

This sequence belongs to the CbiX family. CbiXS subfamily. Homotetramer; dimer of dimers.

The enzyme catalyses Co-sirohydrochlorin + 2 H(+) = sirohydrochlorin + Co(2+). Its pathway is cofactor biosynthesis; adenosylcobalamin biosynthesis; cob(II)yrinate a,c-diamide from sirohydrochlorin (anaerobic route): step 1/10. Functionally, catalyzes the insertion of Co(2+) into sirohydrochlorin as part of the anaerobic pathway to cobalamin biosynthesis. In Archaeoglobus fulgidus (strain ATCC 49558 / DSM 4304 / JCM 9628 / NBRC 100126 / VC-16), this protein is Sirohydrochlorin cobaltochelatase.